A 128-amino-acid polypeptide reads, in one-letter code: Holo-[acyl-carrier-protein] synthase (128 aa).

Mg(2+) contacts are provided by aspartate 8 and glutamate 60.

The protein belongs to the P-Pant transferase superfamily. AcpS family. Mg(2+) serves as cofactor.

It is found in the cytoplasm. It carries out the reaction apo-[ACP] + CoA = holo-[ACP] + adenosine 3',5'-bisphosphate + H(+). In terms of biological role, transfers the 4'-phosphopantetheine moiety from coenzyme A to a Ser of acyl-carrier-protein. The chain is Holo-[acyl-carrier-protein] synthase from Anaeromyxobacter sp. (strain K).